Here is a 304-residue protein sequence, read N- to C-terminus: 2-phospho-L-lactate transferase (304 aa).

Asp49 contributes to the 7,8-didemethyl-8-hydroxy-5-deazariboflavin binding site.

It belongs to the CofD family. In terms of assembly, homodimer. Mg(2+) serves as cofactor.

It carries out the reaction (2S)-lactyl-2-diphospho-5'-guanosine + 7,8-didemethyl-8-hydroxy-5-deazariboflavin = oxidized coenzyme F420-0 + GMP + H(+). The protein operates within cofactor biosynthesis; coenzyme F420 biosynthesis. Catalyzes the transfer of the 2-phospholactate moiety from (2S)-lactyl-2-diphospho-5'-guanosine to 7,8-didemethyl-8-hydroxy-5-deazariboflavin (FO) with the formation of oxidized coenzyme F420-0 and GMP. This Methanocorpusculum labreanum (strain ATCC 43576 / DSM 4855 / Z) protein is 2-phospho-L-lactate transferase.